Consider the following 186-residue polypeptide: CASP-like protein 4C2 (186 aa).

At 1–31 (MRSPQPHRSGGDTQQHFQSTVSVQKLKRFNS) the chain is on the cytoplasmic side. A helical transmembrane segment spans residues 32–52 (LILVFRFAAFCFSLASAVFML). The Extracellular portion of the chain corresponds to 53–71 (TNSRGSDSLHWYNFDAFRY). The chain crosses the membrane as a helical span at residues 72 to 92 (VFAANAIVAIYSLFEMAASVW). Over 93 to 103 (EISRNATLFPE) the chain is Cytoplasmic. A helical transmembrane segment spans residues 104-124 (ICQVWFDFGHDQVFAYLLLSA). Topologically, residues 125–150 (NTAGTELARTLKDTCTDNKAFCVQSD) are extracellular. Residues 151 to 171 (IAIVLGFAGFLFLGISSLFSG) form a helical membrane-spanning segment. Over 172 to 186 (FRVVCFIINGSRFYV) the chain is Cytoplasmic.

The protein belongs to the Casparian strip membrane proteins (CASP) family. In terms of assembly, homodimer and heterodimers.

The protein localises to the cell membrane. The chain is CASP-like protein 4C2 from Populus trichocarpa (Western balsam poplar).